The chain runs to 228 residues: Translation initiation factor 6 (228 aa).

The protein belongs to the eIF-6 family.

In terms of biological role, binds to the 50S ribosomal subunit and prevents its association with the 30S ribosomal subunit to form the 70S initiation complex. The chain is Translation initiation factor 6 from Thermococcus onnurineus (strain NA1).